We begin with the raw amino-acid sequence, 806 residues long: DNA topoisomerase 1 (806 aa).

The span at 1–15 shows a compositional bias: low complexity; the sequence is MSVVSNHHSNGNGNS. Residues 1–236 are disordered; the sequence is MSVVSNHHSN…KKEPPKKKVK (236 aa). Positions 24–34 are enriched in basic and acidic residues; the sequence is DEIKKEVKDEP. 2 stretches are compositionally biased toward basic residues: residues 49 to 60 and 98 to 108; these read RDKKEKKQKKRK and EKKKSKKNNKK. A compositionally biased stretch (acidic residues) spans 113–127; the sequence is SSEDDDEESEGDVSE. Residues 128-137 show a composition bias toward basic and acidic residues; that stretch reads EDVKPQIHSD. Positions 138 to 153 are enriched in acidic residues; that stretch reads DELEEEDEAPTTDDEE. Over residues 159–176 the composition is skewed to basic residues; sequence EKERRKKEKREKKERKEK. The segment covering 177–188 has biased composition (basic and acidic residues); sequence KRLEKENRKIKE. Over residues 189 to 199 the composition is skewed to acidic residues; that stretch reads EDDEDSDDEDD. Over residues 210 to 229 the composition is skewed to basic and acidic residues; it reads KGAEKSKPSTSKKDAGGKKE. 3 interaction with DNA regions span residues 467-468, 530-535, and 634-636; these read KY, RAGNEK, and TVK. A Topo IB-type catalytic domain is found at 474-803; it reads SSKIKGEKDF…IDMTNSSDEE (330 aa). Residue Y761 is the O-(3'-phospho-DNA)-tyrosine intermediate of the active site.

The protein belongs to the type IB topoisomerase family. Expressed in male germ cells and in mature sperm.

Its subcellular location is the nucleus. The protein resides in the nucleolus. The protein localises to the chromosome. It catalyses the reaction ATP-independent breakage of single-stranded DNA, followed by passage and rejoining.. In terms of biological role, releases the supercoiling and torsional tension of DNA introduced during the DNA replication and transcription by transiently cleaving and rejoining one strand of the DNA duplex. Introduces a single-strand break via transesterification at a target site in duplex DNA. The scissile phosphodiester is attacked by the catalytic tyrosine of the enzyme, resulting in the formation of a DNA-(3'-phosphotyrosyl)-enzyme intermediate and the expulsion of a 5'-OH DNA strand. The free DNA strand then rotates around the intact phosphodiester bond on the opposing strand, thus removing DNA supercoils. Finally, in the religation step, the DNA 5'-OH attacks the covalent intermediate to expel the active-site tyrosine and restore the DNA phosphodiester backbone. Required for normal spermatogenesis and oogenesis. This Caenorhabditis elegans protein is DNA topoisomerase 1 (top-1).